Here is a 175-residue protein sequence, read N- to C-terminus: Pre-mRNA-splicing factor SNT309 (175 aa).

In terms of assembly, belongs to the NTC complex (or PRP19-associated complex), composed of at least CEF1, CLF1, ISY1, NTC20, SNT309, SYF1, SYF2, and PRP19. The NTC complex associates with the spliceosome after the release of the U1 and U4 snRNAs and forms the CWC spliceosome subcomplex (or CEF1-associated complex) reminiscent of a late-stage spliceosome composed also of the U2, U5 and U6 snRNAs and at least BUD13, BUD31, BRR2, CDC40, CUS1, CWC2, CWC15, CWC21, CWC22, CWC23, CWC24, CWC25, CWC27, ECM2, HSH155, IST3, LEA1, MSL1, PRP8, PRP9, PRP11, PRP21, PRP22, PRP45, PRP46, SLU7, SMB1, SMD1, SMD2, SMD3, SMX2, SMX3, SNU114, SPP2, RSE1 and YJU2. Interacts with PRP19.

It is found in the nucleus. Its function is as follows. Involved in pre-mRNA splicing by stabilizing the NTC (or PRP19-associated complex). As a component of the NTC complex, associates to the spliceosome to mediate conformational rearrangement or to stabilize the structure of the spliceosome after U4 snRNA dissociation, which leads to spliceosome maturation. The polypeptide is Pre-mRNA-splicing factor SNT309 (SNT309) (Saccharomyces cerevisiae (strain ATCC 204508 / S288c) (Baker's yeast)).